Here is a 97-residue protein sequence, read N- to C-terminus: UPF0235 protein cbdbA1230 (97 aa).

It belongs to the UPF0235 family.

In Dehalococcoides mccartyi (strain CBDB1), this protein is UPF0235 protein cbdbA1230.